The primary structure comprises 448 residues: Trigger factor (448 aa).

The PPIase FKBP-type domain occupies 172-257 (GDRVTVDFVG…MKKIEWPHLP (86 aa)).

Belongs to the FKBP-type PPIase family. Tig subfamily.

The protein localises to the cytoplasm. The catalysed reaction is [protein]-peptidylproline (omega=180) = [protein]-peptidylproline (omega=0). In terms of biological role, involved in protein export. Acts as a chaperone by maintaining the newly synthesized protein in an open conformation. Functions as a peptidyl-prolyl cis-trans isomerase. In Burkholderia cenocepacia (strain ATCC BAA-245 / DSM 16553 / LMG 16656 / NCTC 13227 / J2315 / CF5610) (Burkholderia cepacia (strain J2315)), this protein is Trigger factor.